Reading from the N-terminus, the 1234-residue chain is DNA-directed RNA polymerase subunit beta (1234 aa).

This sequence belongs to the RNA polymerase beta chain family. The RNAP catalytic core consists of 2 alpha, 1 beta, 1 beta' and 1 omega subunit. When a sigma factor is associated with the core the holoenzyme is formed, which can initiate transcription.

It catalyses the reaction RNA(n) + a ribonucleoside 5'-triphosphate = RNA(n+1) + diphosphate. Its function is as follows. DNA-dependent RNA polymerase catalyzes the transcription of DNA into RNA using the four ribonucleoside triphosphates as substrates. The protein is DNA-directed RNA polymerase subunit beta of Clostridium perfringens (strain SM101 / Type A).